We begin with the raw amino-acid sequence, 545 residues long: MTSRKILVTSALPYANGEIHLGHLLEYIQTDIWVRFQKMMGNECHYVCADDAHGTAIMLKADELDITPEVLIKNMSNKHQIDFQSFSIDFSQYHSTHSQENKDISTNIYNKLNVAGFIKTRVISQAFDPLKQMFLADRFIKGDCPKCGSNEQYGDNCEVCGATYSSIELKNAKSVISGVTPITKDSEHYFFDLPQFEVQLKEWTKAGHLQDAISNKLSEWFKEGLQQWDISRDAPYFGFQIPAVEGKYFYVWLDAPIGYMASFKKLCDEQNIDFNEYFNKDSNTELYHFIGKDIIYFHALFWPAMLIGSNYRTPSAIFAHGFLTINGQKMSKSRGTFIQARTYLNYLNPEYLRYYYAYKLSSKIDDIDLNLIDFKQRINSDLVGKVVNIASRSAGFIVKKFNKTLSSYTIESKFYQEFFDCGDIIAKHYEARNYNQAMRVIIKLANKANQYIDKHKPWQLIKKPNQQTQVHDVTSLAINLFRVLMTYLKPVLPIMAKQVEKFLNIDELHWQDLKYPLIKHQINTFKPLMLRIEDDQIERIIEASK.

The 'HIGH' region signature appears at 13–23; sequence PYANGEIHLGH. Residues Cys-144, Cys-147, Cys-157, and Cys-160 each coordinate Zn(2+). The short motif at 329 to 333 is the 'KMSKS' region element; sequence KMSKS. An ATP-binding site is contributed by Lys-332.

It belongs to the class-I aminoacyl-tRNA synthetase family. MetG type 1 subfamily. As to quaternary structure, monomer. It depends on Zn(2+) as a cofactor.

Its subcellular location is the cytoplasm. The enzyme catalyses tRNA(Met) + L-methionine + ATP = L-methionyl-tRNA(Met) + AMP + diphosphate. Its function is as follows. Is required not only for elongation of protein synthesis but also for the initiation of all mRNA translation through initiator tRNA(fMet) aminoacylation. The polypeptide is Methionine--tRNA ligase (Vesicomyosocius okutanii subsp. Calyptogena okutanii (strain HA)).